The sequence spans 415 residues: Multidrug resistance protein MdtA (415 aa).

A signal peptide spans 1-21 (MKGSYKSRWVIVIVVVIAAIA). Over residues 34-47 (SAAPGATKQAQQSP) the composition is skewed to polar residues. Disordered regions lie at residues 34 to 60 (SAAP…GPLA) and 392 to 415 (EAQS…GARS). The segment covering 399-415 (PEEKATSREYAKKGARS) has biased composition (basic and acidic residues).

This sequence belongs to the membrane fusion protein (MFP) (TC 8.A.1) family. As to quaternary structure, part of a tripartite efflux system composed of MdtA, MdtB and MdtC.

It is found in the cell inner membrane. The MdtABC tripartite complex confers resistance against novobiocin and deoxycholate. The chain is Multidrug resistance protein MdtA from Escherichia fergusonii (strain ATCC 35469 / DSM 13698 / CCUG 18766 / IAM 14443 / JCM 21226 / LMG 7866 / NBRC 102419 / NCTC 12128 / CDC 0568-73).